A 334-amino-acid chain; its full sequence is Galactinol synthase 3 (334 aa).

K97 is an active-site residue. Residues D113, D115, and H251 each contribute to the Mn(2+) site.

It belongs to the glycosyltransferase 8 family. Galactosyltransferase subfamily. The cofactor is a divalent metal cation.

The protein resides in the cytoplasm. The catalysed reaction is myo-inositol + UDP-alpha-D-galactose = alpha-D-galactosyl-(1-&gt;3)-1D-myo-inositol + UDP + H(+). In terms of biological role, galactinol synthase involved in the biosynthesis of raffinose family oligosaccharides (RFOs) that function as osmoprotectants. May promote plant stress tolerance. The sequence is that of Galactinol synthase 3 (GOLS3) from Arabidopsis thaliana (Mouse-ear cress).